The sequence spans 122 residues: Small ribosomal subunit protein uS13 (122 aa).

The tract at residues 97–122 is disordered; it reads PVRGQRTKTNARTRKGPARTVAGKKK.

It belongs to the universal ribosomal protein uS13 family. As to quaternary structure, part of the 30S ribosomal subunit. Forms a loose heterodimer with protein S19. Forms two bridges to the 50S subunit in the 70S ribosome.

Located at the top of the head of the 30S subunit, it contacts several helices of the 16S rRNA. In the 70S ribosome it contacts the 23S rRNA (bridge B1a) and protein L5 of the 50S subunit (bridge B1b), connecting the 2 subunits; these bridges are implicated in subunit movement. Contacts the tRNAs in the A and P-sites. This is Small ribosomal subunit protein uS13 from Geobacter metallireducens (strain ATCC 53774 / DSM 7210 / GS-15).